Reading from the N-terminus, the 286-residue chain is Formyltetrahydrofolate deformylase (286 aa).

Positions 8–88 (VLTLQCPEGI…MDWQLRERGQ (81 aa)) constitute an ACT domain. Asp-230 is a catalytic residue.

It belongs to the PurU family.

The enzyme catalyses (6R)-10-formyltetrahydrofolate + H2O = (6S)-5,6,7,8-tetrahydrofolate + formate + H(+). It participates in purine metabolism; IMP biosynthesis via de novo pathway; formate from 10-formyl-5,6,7,8-tetrahydrofolate: step 1/1. Its function is as follows. Catalyzes the hydrolysis of 10-formyltetrahydrofolate (formyl-FH4) to formate and tetrahydrofolate (FH4). This is Formyltetrahydrofolate deformylase from Corynebacterium sp. (strain P-1).